The sequence spans 308 residues: Growth/differentiation factor 15 (308 aa).

Positions 1-29 (MPGQELRTVNGSQMLLVLLVLSWLPHGGA) are cleaved as a signal peptide. Positions 30–194 (LSLAEASRAS…RPQAARGRRR (165 aa)) are excised as a propeptide. The N-linked (GlcNAc...) asparagine glycan is linked to Asn70. Residues 152–177 (APALHLRLSPPPSQSDQLLAESSSAR) form a disordered region. Positions 165–177 (QSDQLLAESSSAR) are enriched in polar residues. Disulfide bonds link Cys203–Cys210, Cys211–Cys274, Cys240–Cys305, and Cys244–Cys307.

The protein belongs to the TGF-beta family. As to quaternary structure, homodimer; disulfide-linked. Interacts with GFRAL and RET; ligand of GFRAL, which mediates GDF15 internalization and cellular signaling through interaction with RET via the formation of a 2:2:2 ternary complex composed of GDF15, GFRAL and RET. In terms of tissue distribution, detected in plasma (at protein level). Highly expressed in placenta, with lower levels in prostate and colon and some expression in kidney.

Its subcellular location is the secreted. In terms of biological role, hormone produced in response to various stresses to confer information about those stresses to the brain, and trigger an aversive response, characterized by nausea, vomiting, and/or loss of appetite. The aversive response is both required to reduce continuing exposure to those stresses at the time of exposure and to promote avoidance behavior in the future. Acts by binding to its receptor, GFRAL, activating GFRAL-expressing neurons localized in the area postrema and nucleus tractus solitarius of the brainstem. It then triggers the activation of neurons localized within the parabrachial nucleus and central amygdala, which constitutes part of the 'emergency circuit' that shapes responses to stressful conditions. The GDF15-GFRAL signal induces expression of genes involved in metabolism, such as lipid metabolism in adipose tissues. Required for avoidance behavior in response to food allergens: induced downstream of mast cell activation to promote aversion and minimize harmful effects of exposure to noxious substances. In addition to suppress appetite, also promotes weight loss by enhancing energy expenditure in muscle: acts by increasing calcium futile cycling in muscle. Contributes to the effect of metformin, an anti-diabetic drug, on appetite reduction and weight loss: produced in the kidney in response to metformin treatment, thereby activating the GDF15-GFRAL response, leading to reduced appetite and weight. The contribution of GDF15 to weight loss following metformin treatment is however limited and subject to discussion. Produced in response to anticancer drugs, such as camptothecin or cisplatin, promoting nausea, vomiting and contributing to malnutrition. Overproduced in many cancers, promoting anorexia in cancer (cachexia). Responsible for the risk of nausea and vomiting during pregnancy: high levels of GDF15 during pregnancy, mostly originating from the fetus, are associated with increased nausea and vomiting. Maternal sensitivity to nausea is probably determined by pre-pregnancy exposure to GDF15, women with naturally high level of GDF15 being less susceptible to nausea than women with low levels of GDF15 before pregnancy. Promotes metabolic adaptation in response to systemic inflammation caused by bacterial and viral infections in order to promote tissue tolerance and prevent tissue damage. Required for tissue tolerance in response to myocardial infarction by acting as an inhibitor of leukocyte integring activation, thereby protecting against cardiac rupture. Inhibits growth hormone signaling on hepatocytes. The chain is Growth/differentiation factor 15 from Homo sapiens (Human).